The chain runs to 113 residues: uncharacterized protein (113 aa).

Belongs to the HesB/IscA family.

This is an uncharacterized protein from Synechocystis sp. (strain ATCC 27184 / PCC 6803 / Kazusa).